The sequence spans 1926 residues: Rho GTPase-activating protein 21-A (1926 aa).

A disordered region spans residues 1–41 (MATRRAIVPEQQQEPSSPASEISKNKDGQEQSEMVSPMEEE). Residues 10-22 (EQQQEPSSPASEI) are compositionally biased toward polar residues. The PDZ domain occupies 77–162 (HTSIKDEENG…TLELSVMPKD (86 aa)). 6 disordered regions span residues 211-236 (VEVPPSGTSLAKQQSSRPVRTATTQP), 353-378 (PTAQAEGSPSPTNHYSSPGPHQQIDW), 416-487 (TDYN…RSES), 571-592 (QPTRQNSYRSPHPRPAVSDRSG), 640-704 (FQRK…DSDA), and 868-905 (GKLGLKQGSSLKGVQARENVPSSEDSESRKDSSSDVFS). Composition is skewed to polar residues over residues 216 to 236 (SGTSLAKQQSSRPVRTATTQP), 353 to 372 (PTAQAEGSPSPTNHYSSPGP), and 416 to 429 (TDYNQMLPNHFSGQ). A compositionally biased stretch (low complexity) spans 441-451 (QQSVQMRQRSV). The span at 452-466 (SQERLEDPVLMKEWP) shows a compositional bias: basic and acidic residues. The span at 468 to 479 (SASQDTLSSAVA) shows a compositional bias: polar residues. Residues 640–669 (FQRKTQTESASGFQLDSVKTSMSASSSPPA) show a composition bias toward polar residues. One can recognise a PH domain in the interval 906–1019 (DSNKEGFLYF…WIKAIQENGN (114 aa)). Over residues 1044–1064 (MSSASNKSEQSPKAPRQTLSI) the composition is skewed to polar residues. The interval 1044–1107 (MSSASNKSEQ…SPPKDKGSWR (64 aa)) is disordered. Positions 1083 to 1105 (PKQESERRLFSKDDISPPKDKGS) are enriched in basic and acidic residues. In terms of domain architecture, Rho-GAP spans 1126–1318 (VRLDDCPPAH…TLIQKHDWFF (193 aa)). Disordered stretches follow at residues 1330-1381 (VHEE…SGKD), 1396-1416 (ASRKRKKPKDKPQPSSSEDEL), 1512-1540 (QMEESMSDSGTMLSNSSQASAQRSKPKVV), 1573-1598 (LDPNPISPEVQSVAESKGEEADDERS), 1626-1658 (RQHRSKEEDPPRNVQANAEGSPSCTEGSITPRL), and 1827-1915 (STSE…LSGT). Over residues 1512–1534 (QMEESMSDSGTMLSNSSQASAQR) the composition is skewed to polar residues. 2 stretches are compositionally biased toward polar residues: residues 1639-1653 (VQANAEGSPSCTEGS) and 1866-1902 (TADIPTGSESPSLGTAPQSDDQMNGDSFQSKNKNNFS).

It is found in the golgi apparatus membrane. It localises to the cell junction. The protein resides in the cytoplasmic vesicle membrane. Its subcellular location is the cytoplasm. The protein localises to the cytoskeleton. GTPase-activating protein (GAP) for rhoa and cdc42. The polypeptide is Rho GTPase-activating protein 21-A (arhgap21-a) (Xenopus laevis (African clawed frog)).